The chain runs to 178 residues: Large ribosomal subunit protein uL5 (178 aa).

The protein belongs to the universal ribosomal protein uL5 family. Part of the 50S ribosomal subunit; part of the 5S rRNA/L5/L18/L25 subcomplex. Contacts the 5S rRNA and the P site tRNA. Forms a bridge to the 30S subunit in the 70S ribosome.

This is one of the proteins that bind and probably mediate the attachment of the 5S RNA into the large ribosomal subunit, where it forms part of the central protuberance. In the 70S ribosome it contacts protein S13 of the 30S subunit (bridge B1b), connecting the 2 subunits; this bridge is implicated in subunit movement. Contacts the P site tRNA; the 5S rRNA and some of its associated proteins might help stabilize positioning of ribosome-bound tRNAs. This chain is Large ribosomal subunit protein uL5, found in Prochlorococcus marinus (strain MIT 9515).